The following is a 413-amino-acid chain: Arginine biosynthesis bifunctional protein ArgJ 1 (413 aa).

Positions 154, 180, 191, 277, 408, and 413 each coordinate substrate. T191 acts as the Nucleophile in catalysis.

This sequence belongs to the ArgJ family. As to quaternary structure, heterotetramer of two alpha and two beta chains.

It is found in the cytoplasm. It catalyses the reaction N(2)-acetyl-L-ornithine + L-glutamate = N-acetyl-L-glutamate + L-ornithine. It carries out the reaction L-glutamate + acetyl-CoA = N-acetyl-L-glutamate + CoA + H(+). The protein operates within amino-acid biosynthesis; L-arginine biosynthesis; L-ornithine and N-acetyl-L-glutamate from L-glutamate and N(2)-acetyl-L-ornithine (cyclic): step 1/1. It functions in the pathway amino-acid biosynthesis; L-arginine biosynthesis; N(2)-acetyl-L-ornithine from L-glutamate: step 1/4. Catalyzes two activities which are involved in the cyclic version of arginine biosynthesis: the synthesis of N-acetylglutamate from glutamate and acetyl-CoA as the acetyl donor, and of ornithine by transacetylation between N(2)-acetylornithine and glutamate. This Nostoc sp. (strain PCC 7120 / SAG 25.82 / UTEX 2576) protein is Arginine biosynthesis bifunctional protein ArgJ 1.